Consider the following 227-residue polypeptide: Phosphatidylserine decarboxylase proenzyme (227 aa).

The Schiff-base intermediate with substrate; via pyruvic acid role is filled by Ser-184. Pyruvic acid (Ser); by autocatalysis is present on Ser-184.

Belongs to the phosphatidylserine decarboxylase family. PSD-A subfamily. As to quaternary structure, heterodimer of a large membrane-associated beta subunit and a small pyruvoyl-containing alpha subunit. The cofactor is pyruvate. Is synthesized initially as an inactive proenzyme. Formation of the active enzyme involves a self-maturation process in which the active site pyruvoyl group is generated from an internal serine residue via an autocatalytic post-translational modification. Two non-identical subunits are generated from the proenzyme in this reaction, and the pyruvate is formed at the N-terminus of the alpha chain, which is derived from the carboxyl end of the proenzyme. The post-translation cleavage follows an unusual pathway, termed non-hydrolytic serinolysis, in which the side chain hydroxyl group of the serine supplies its oxygen atom to form the C-terminus of the beta chain, while the remainder of the serine residue undergoes an oxidative deamination to produce ammonia and the pyruvoyl prosthetic group on the alpha chain.

The protein localises to the cell membrane. It carries out the reaction a 1,2-diacyl-sn-glycero-3-phospho-L-serine + H(+) = a 1,2-diacyl-sn-glycero-3-phosphoethanolamine + CO2. Its pathway is phospholipid metabolism; phosphatidylethanolamine biosynthesis; phosphatidylethanolamine from CDP-diacylglycerol: step 2/2. Catalyzes the formation of phosphatidylethanolamine (PtdEtn) from phosphatidylserine (PtdSer). The protein is Phosphatidylserine decarboxylase proenzyme of Ehrlichia ruminantium (strain Welgevonden).